The sequence spans 122 residues: Large ribosomal subunit protein uL14c (122 aa).

The protein belongs to the universal ribosomal protein uL14 family. Part of the 50S ribosomal subunit.

The protein localises to the plastid. It is found in the chloroplast. Functionally, binds to 23S rRNA. This chain is Large ribosomal subunit protein uL14c, found in Lemna minor (Common duckweed).